We begin with the raw amino-acid sequence, 445 residues long: Polyadenylate-binding protein RBP47A (445 aa).

Residues 1–12 (MQTPNNNGSTDS) show a composition bias toward polar residues. 2 disordered regions span residues 1–45 (MQTP…WQQQ) and 93–117 (AAYQ…GGDD). The span at 22–35 (TPPPPLQQSTPPPQ) shows a compositional bias: pro residues. Composition is skewed to low complexity over residues 36-45 (QQQQQQWQQQ) and 93-108 (AAYQ…SQQQ). 3 consecutive RRM domains span residues 119 to 199 (KTLW…WASF), 213 to 292 (LSIF…IATP), and 327 to 399 (STIF…WGRS).

This sequence belongs to the polyadenylate-binding RBP47 family. In terms of assembly, interacts with the poly(A) tail of mRNA in nucleus. As to expression, expressed in leaves, stems, flowers, and seedlings.

The protein resides in the nucleus. The protein localises to the cytoplasmic granule. Its function is as follows. Heterogeneous nuclear ribonucleoprotein (hnRNP)-protein binding the poly(A) tail of mRNA and probably involved in some steps of pre-mRNA maturation. The sequence is that of Polyadenylate-binding protein RBP47A (RBP47A) from Arabidopsis thaliana (Mouse-ear cress).